Here is a 450-residue protein sequence, read N- to C-terminus: MRRHAIILAAGKGTRMKSKKYKVLHEVAGKPMVEHVLESVKGSGVDQVVTIVGHGAESVKGHLGERSLYSFQEEQLGTAHAVQMAKSHLEDKEGTTIVVCGDTPLITKETLVTLIAHHEDANAQATVLSASIQQPYGYGRIVRNASGRLERIVEEKDATQAEKDINEISSGIFAFNNKTLFEKLTQVKNDNAQGEYYLPDVLSLILNDGGIVEVYRTNDVEEIMGVNDRVMLSQAEKAMQRRTNHYHMLNGVTIIDPDSTYIGPDVTIGSDTVIEPGVRINGRTEIGEDVVIGQYSEINNSTIENGACIQQSVVNDASVGANTKVGPFAQLRPGAQLGADVKVGNFVEIKKADLKDGAKVSHLSYIGDAVIGERTNIGCGTITVNYDGENKFKTIVGKDSFVGCNVNLVAPVTIGDDVLVAAGSTITDDVPNDSLAVARARQTTKEGYRK.

A pyrophosphorylase region spans residues 1 to 229 (MRRHAIILAA…VEEIMGVNDR (229 aa)). UDP-N-acetyl-alpha-D-glucosamine is bound by residues 8-11 (LAAG), lysine 22, glutamine 72, and 77-78 (GT). Aspartate 102 lines the Mg(2+) pocket. Residues glycine 139, glutamate 154, and asparagine 227 each contribute to the UDP-N-acetyl-alpha-D-glucosamine site. Asparagine 227 contacts Mg(2+). Residues 230–250 (VMLSQAEKAMQRRTNHYHMLN) are linker. Positions 251-450 (GVTIIDPDST…RQTTKEGYRK (200 aa)) are N-acetyltransferase. Positions 332 and 350 each coordinate UDP-N-acetyl-alpha-D-glucosamine. Residue histidine 362 is the Proton acceptor of the active site. Positions 365 and 376 each coordinate UDP-N-acetyl-alpha-D-glucosamine. Acetyl-CoA contacts are provided by residues 385–386 (NY), alanine 422, and arginine 439.

In the N-terminal section; belongs to the N-acetylglucosamine-1-phosphate uridyltransferase family. It in the C-terminal section; belongs to the transferase hexapeptide repeat family. In terms of assembly, homotrimer. Mg(2+) is required as a cofactor.

Its subcellular location is the cytoplasm. It catalyses the reaction alpha-D-glucosamine 1-phosphate + acetyl-CoA = N-acetyl-alpha-D-glucosamine 1-phosphate + CoA + H(+). The enzyme catalyses N-acetyl-alpha-D-glucosamine 1-phosphate + UTP + H(+) = UDP-N-acetyl-alpha-D-glucosamine + diphosphate. It participates in nucleotide-sugar biosynthesis; UDP-N-acetyl-alpha-D-glucosamine biosynthesis; N-acetyl-alpha-D-glucosamine 1-phosphate from alpha-D-glucosamine 6-phosphate (route II): step 2/2. Its pathway is nucleotide-sugar biosynthesis; UDP-N-acetyl-alpha-D-glucosamine biosynthesis; UDP-N-acetyl-alpha-D-glucosamine from N-acetyl-alpha-D-glucosamine 1-phosphate: step 1/1. The protein operates within bacterial outer membrane biogenesis; LPS lipid A biosynthesis. Functionally, catalyzes the last two sequential reactions in the de novo biosynthetic pathway for UDP-N-acetylglucosamine (UDP-GlcNAc). The C-terminal domain catalyzes the transfer of acetyl group from acetyl coenzyme A to glucosamine-1-phosphate (GlcN-1-P) to produce N-acetylglucosamine-1-phosphate (GlcNAc-1-P), which is converted into UDP-GlcNAc by the transfer of uridine 5-monophosphate (from uridine 5-triphosphate), a reaction catalyzed by the N-terminal domain. In Staphylococcus aureus (strain NCTC 8325 / PS 47), this protein is Bifunctional protein GlmU.